A 654-amino-acid chain; its full sequence is Tetratricopeptide repeat protein 30 homolog (654 aa).

TPR repeat units follow at residues Glu-10–Arg-43, Ala-44–Glu-76, Ala-143–Asn-176, Leu-178–Asn-210, Leu-384–Val-417, Ala-449–Asp-483, and Cys-533–Gly-566.

Belongs to the TTC30/dfy-1/fleer family.

The protein resides in the cell projection. The protein localises to the cilium. In terms of biological role, required for polyglutamylation of axonemal tubulin in sensory cilia. Plays a role in anterograde intraflagellar transport (IFT), the process by which cilia precursors are transported from the base of the cilium to the site of their incorporation at the tip. The polypeptide is Tetratricopeptide repeat protein 30 homolog (Drosophila pseudoobscura pseudoobscura (Fruit fly)).